Here is a 379-residue protein sequence, read N- to C-terminus: Putative 8-amino-7-oxononanoate synthase (379 aa).

Residue Arg-18 participates in substrate binding. 106–107 (GY) contacts pyridoxal 5'-phosphate. Residue His-130 participates in substrate binding. Pyridoxal 5'-phosphate contacts are provided by residues Ser-178, 204–207 (DEAH), and 235–238 (TFGK). Lys-238 is subject to N6-(pyridoxal phosphate)lysine. Thr-351 is a binding site for substrate.

The protein belongs to the class-II pyridoxal-phosphate-dependent aminotransferase family. BioF subfamily. Homodimer. The cofactor is pyridoxal 5'-phosphate.

It catalyses the reaction 6-carboxyhexanoyl-[ACP] + L-alanine + H(+) = (8S)-8-amino-7-oxononanoate + holo-[ACP] + CO2. It participates in cofactor biosynthesis; biotin biosynthesis. Catalyzes the decarboxylative condensation of pimeloyl-[acyl-carrier protein] and L-alanine to produce 8-amino-7-oxononanoate (AON), [acyl-carrier protein], and carbon dioxide. The chain is Putative 8-amino-7-oxononanoate synthase (bioF) from Haemophilus influenzae (strain 86-028NP).